Reading from the N-terminus, the 331-residue chain is MDEKTKIYDITIIGGGPVGLFAAFYAGMRNASVKIIESLPQLGGQLSTLYPEKYIYDIPGYPSVRAQELVNNLIQQMKPFDPTVALEEAVQSVEKQVDGTFEIITKKDTHYSKAIIITAGNGAFEPRRLDLPEAEQYEGKNIHYFINDLSRFSGRRVAVCGGGDSAVDWALMLEKVASSVSIVHRRNAFRAHEHSVNNLEKSSIAIKTPFIPTEVLGNGDKLTHITLQEVKGDTTETLEIDDFIINYGFVSSLGPIKNWGLELERNSIIVNSKMETNIPGIYCAGDICTYDGKVKLIATGFGEAPTAVNNAMNFIDPKTRVQPMHSTSLFE.

7 residues coordinate FAD: glutamate 37, glutamine 45, tyrosine 50, valine 90, phenylalanine 124, aspartate 286, and threonine 327.

Belongs to the ferredoxin--NADP reductase type 2 family. Homodimer. The cofactor is FAD.

It catalyses the reaction 2 reduced [2Fe-2S]-[ferredoxin] + NADP(+) + H(+) = 2 oxidized [2Fe-2S]-[ferredoxin] + NADPH. The polypeptide is Ferredoxin--NADP reductase 2 (Listeria innocua serovar 6a (strain ATCC BAA-680 / CLIP 11262)).